Consider the following 219-residue polypeptide: Cytidylate kinase (219 aa).

Position 9-17 (9-17) interacts with ATP; the sequence is GPAGSGKTT.

It belongs to the cytidylate kinase family. Type 1 subfamily.

The protein localises to the cytoplasm. The enzyme catalyses CMP + ATP = CDP + ADP. It carries out the reaction dCMP + ATP = dCDP + ADP. In Fervidobacterium nodosum (strain ATCC 35602 / DSM 5306 / Rt17-B1), this protein is Cytidylate kinase.